Here is a 327-residue protein sequence, read N- to C-terminus: Methionine import ATP-binding protein MetN (327 aa).

The region spanning 3 to 239 (VELKNIEKIY…PKHAVTKELL (237 aa)) is the ABC transporter domain. 36 to 43 (GYSGAGKS) is an ATP binding site.

The protein belongs to the ABC transporter superfamily. Methionine importer (TC 3.A.1.24) family. In terms of assembly, the complex is composed of two ATP-binding proteins (MetN), two transmembrane proteins (MetI) and a solute-binding protein (MetQ).

It is found in the cell inner membrane. The catalysed reaction is L-methionine(out) + ATP + H2O = L-methionine(in) + ADP + phosphate + H(+). It catalyses the reaction D-methionine(out) + ATP + H2O = D-methionine(in) + ADP + phosphate + H(+). Its function is as follows. Part of the ABC transporter complex MetNIQ involved in methionine import. Responsible for energy coupling to the transport system. The chain is Methionine import ATP-binding protein MetN from Helicobacter pylori (strain ATCC 700392 / 26695) (Campylobacter pylori).